A 384-amino-acid polypeptide reads, in one-letter code: MSTAVTFFGQHVLNRVSFLRCSKEFIKKSLNHDSTVFIPFIEGEALISPENGDLVQLSNSVKSYKNILSAIVPLYTTLLNTTRSRSDESGINVTFLGLLEGTDSAFNFEWSNISYKGTPYFGLDIRVTESTLFKKVDFEPIFSYPKVTRDHIFKQTNEDASLYSQGKMYLDWLAKYKFCPGCGSPLFPVEAGTKLQCSNENRNVYCNVRDARINNVCFPRTDPTVIIALTNSDYSKCCLARSKKRYGDFVLYSTIAGFMEPSETIEEACIREIWEETGISCKNIDIVRSQPWPYPCSLMIGCLGIVQFNSKNEVINLNHDDELLDAQWFDTTEIIQALDKYAGGYRVPFKNDINLPGSTTIAFQLINHVCENYKNLRKTSSSHL.

Zn(2+) is bound by residues C179, C182, C197, and C206. One can recognise a Nudix hydrolase domain in the interval 219-351 (PRTDPTVIIA…AGGYRVPFKN (133 aa)). The Mg(2+) site is built by A256, E272, E276, and E322. Residues 256–258 (AGF), E272, E276, and E322 contribute to the substrate site. The short motif at 257-278 (GFMEPSETIEEACIREIWEETG) is the Nudix box element. The Microbody targeting signal signature appears at 378 to 380 (KTS).

Belongs to the Nudix hydrolase family. NudC subfamily. Homodimer. It depends on Mg(2+) as a cofactor. The cofactor is Zn(2+).

The protein resides in the peroxisome. It catalyses the reaction a 5'-end NAD(+)-phospho-ribonucleoside in mRNA + H2O = a 5'-end phospho-adenosine-phospho-ribonucleoside in mRNA + beta-nicotinamide D-ribonucleotide + 2 H(+). It carries out the reaction NAD(+) + H2O = beta-nicotinamide D-ribonucleotide + AMP + 2 H(+). The enzyme catalyses NADH + H2O = reduced beta-nicotinamide D-ribonucleotide + AMP + 2 H(+). Functionally, mRNA decapping enzyme that specifically removes the nicotinamide adenine dinucleotide (NAD) cap from a subset of mRNAs by hydrolyzing the diphosphate linkage to produce nicotinamide mononucleotide (NMN) and 5' monophosphate mRNA. The NAD-cap is present at the 5'-end of some RNAs; in contrast to the canonical N7 methylguanosine (m7G) cap, the NAD cap promotes mRNA decay. Mediates the hydrolysis of some nucleoside diphosphate derivatives. In Saccharomyces cerevisiae (strain ATCC 204508 / S288c) (Baker's yeast), this protein is NAD-capped RNA hydrolase NPY1.